Consider the following 125-residue polypeptide: Cu-Zn superoxide dismutase-like protein OPG175 (125 aa).

Cysteine 52 and cysteine 102 are disulfide-bonded.

This sequence belongs to the Cu-Zn superoxide dismutase family.

The protein localises to the virion. The protein resides in the host cytoplasm. Functionally, superoxide dismutase-like protein with no enzymatic activity. The sequence is that of Cu-Zn superoxide dismutase-like protein OPG175 (OPG175) from Homo sapiens (Human).